The chain runs to 551 residues: Structure-specific endonuclease subunit MUS81 (551 aa).

Disordered regions lie at residues 84–131 (HLAS…VGYW) and 229–259 (FRPE…QQRP). Residues 92–107 (APSSPSGKKGASKGPP) are compositionally biased toward low complexity. A Phosphoserine modification is found at Ser-95. Positions 110–131 (VQDSSMPVPTQPQAGSTSVGYW) are enriched in polar residues. Residues 124–244 (GSTSVGYWPA…HGEDSAVPEA (121 aa)) form an interaction with BLM region. The winged helix domain (WHD); critical for endonuclease activity stretch occupies residues 131–230 (WPAQNSGARE…GLSTRHAGFR (100 aa)). The span at 229-238 (FRPEEHHGED) shows a compositional bias: basic and acidic residues. An ERCC4 domain is found at 270-372 (LLCVDIGETR…HRVYLVEEHG (103 aa)). Catalysis depends on residues Asp-274, Glu-277, and Asp-307. Mg(2+) is bound by residues Asp-274, Glu-277, Asp-307, Glu-333, and Arg-334. The helix-hairpin-helix (2HhH); involved in DNA recognition and bending stretch occupies residues 471-545 (VREVFARQLM…LSRTLYQLYC (75 aa)).

The protein belongs to the XPF family. Part of the heterodimeric DNA structure-specific endonuclease complex MUS81-EME1. Part of the heterodimeric DNA structure-specific endonuclease complex MUS81-EME2. Interacts with BLM; may stimulate the endonuclease activity of MUS81. Interacts with SLX4/BTBD12; this interaction is direct and links the MUS81-EME1 complex to SLX4, which may coordinate the action of the structure-specific endonuclease during DNA repair. Interacts with DCLRE1B/Apollo. Interacts with RECQL5; this interaction stimulates mitotic DNA synthesis. Interacts with CHEK2. Requires Mg(2+) as cofactor. In terms of tissue distribution, expressed highly in testis. Expressed also in bone marrow, brain, thymus and to a lesser extent in heart and skeletal muscle, colon, kidney and spleen.

Its subcellular location is the nucleus. It is found in the nucleolus. Catalytic subunit of two functionally distinct, structure-specific, heterodimeric DNA endonucleases MUS81-EME1 and MUS81-EME2 that are involved in the maintenance of genome stability. Both endonucleases have essentially the same substrate specificity though MUS81-EME2 is more active than its MUS81-EME1 counterpart. Both cleave 3'-flaps and nicked Holliday junctions, and exhibit limited endonuclease activity with 5' flaps and nicked double-stranded DNAs. MUS81-EME2 which is active during the replication of DNA is more specifically involved in replication fork processing. Replication forks frequently encounter obstacles to their passage, including DNA base lesions, DNA interstrand cross-links, difficult-to-replicate sequences, transcription bubbles, or tightly bound proteins. One mechanism for the restart of a stalled replication fork involves nucleolytic cleavage mediated by the MUS81-EME2 endonuclease. By acting upon the stalled fork, MUS81-EME2 generates a DNA double-strand break (DSB) that can be repaired by homologous recombination, leading to the restoration of an active fork. MUS81-EME2 could also function in telomere maintenance. MUS81-EME1, on the other hand, is active later in the cell cycle and functions in the resolution of mitotic recombination intermediates including the Holliday junctions, the four-way DNA intermediates that form during homologous recombination. The protein is Structure-specific endonuclease subunit MUS81 of Mus musculus (Mouse).